The sequence spans 213 residues: Dimethyl sulfoxide reductase transcriptional activator (213 aa).

One can recognise an HTH bat-type domain in the interval 155-206; sequence LTAKQREAALIAVHHGYYETPRRTELATLAEALGISKSALSQRLNAVEAKLA.

Involved in activating dmsEABCD gene expression related to dimethyl sulfoxide (DMSO) reductase. Required for anaerobic respiration on dimethyl sulfoxide (DMSO). This Haloferax volcanii (strain ATCC 29605 / DSM 3757 / JCM 8879 / NBRC 14742 / NCIMB 2012 / VKM B-1768 / DS2) (Halobacterium volcanii) protein is Dimethyl sulfoxide reductase transcriptional activator.